A 206-amino-acid polypeptide reads, in one-letter code: Anti-sigma-W factor RsiW (206 aa).

The Cytoplasmic portion of the chain corresponds to 1–87 (MSCPEHIVQL…ASINRWLKAH (87 aa)). Zn(2+) is bound by residues His30, Cys34, and Cys37. The chain crosses the membrane as a helical span at residues 88–108 (PFLVAAALFAILMGGSFFSSW). Residues 109–206 (KNDHDFSVSS…SVFGVKESKE (98 aa)) lie on the Extracellular side of the membrane.

The protein belongs to the zinc-associated anti-sigma factor (ZAS) superfamily. Anti-sigma-W factor family. The cofactor is Zn(2+). In terms of processing, is processed by three successive proteolytic events. First, the extracellular region of RsiW is cleaved by PrsW (Site-1 cleavage) in response to cell envelope stresses. Next, it undergoes cleavage at an intramembrane site (Site-2 cleavage) mediated by RasP. This cleavage uncovers a cryptic proteolytic tag with conserved alanine residues in the transmembrane segment, that is recognized mainly by the ClpXP protease, which completely degrades the protein in the cytoplasm and leads to the induction of the sigma-W-controlled genes.

The protein localises to the membrane. Is the anti-sigma factor for SigW. The presence of RsiW leads to the inactivation of SigW, and its proteolytic destruction to sigma-W activation. The chain is Anti-sigma-W factor RsiW (rsiW) from Bacillus licheniformis (strain ATCC 14580 / DSM 13 / JCM 2505 / CCUG 7422 / NBRC 12200 / NCIMB 9375 / NCTC 10341 / NRRL NRS-1264 / Gibson 46).